The sequence spans 156 residues: Transcription elongation factor GreA (156 aa).

Residues 2-78 adopt a coiled-coil conformation; it reads AKEIILTQEG…MISKAKLIED (77 aa).

This sequence belongs to the GreA/GreB family.

Functionally, necessary for efficient RNA polymerase transcription elongation past template-encoded arresting sites. The arresting sites in DNA have the property of trapping a certain fraction of elongating RNA polymerases that pass through, resulting in locked ternary complexes. Cleavage of the nascent transcript by cleavage factors such as GreA or GreB allows the resumption of elongation from the new 3'terminus. GreA releases sequences of 2 to 3 nucleotides. This Mesoplasma florum (strain ATCC 33453 / NBRC 100688 / NCTC 11704 / L1) (Acholeplasma florum) protein is Transcription elongation factor GreA.